We begin with the raw amino-acid sequence, 406 residues long: Tyrosine--tRNA ligase (406 aa).

Tyrosine 35 serves as a coordination point for L-tyrosine. The 'HIGH' region signature appears at 40 to 49 (PTADSLHVGH). L-tyrosine is bound by residues tyrosine 168 and glutamine 172. The 'KMSKS' region signature appears at 228-232 (KMGKT). Residue lysine 231 participates in ATP binding. The S4 RNA-binding domain occupies 340–404 (SELLDILVEA…RGKKNYNKIV (65 aa)).

Belongs to the class-I aminoacyl-tRNA synthetase family. TyrS type 1 subfamily. As to quaternary structure, homodimer.

The protein resides in the cytoplasm. The enzyme catalyses tRNA(Tyr) + L-tyrosine + ATP = L-tyrosyl-tRNA(Tyr) + AMP + diphosphate + H(+). Catalyzes the attachment of tyrosine to tRNA(Tyr) in a two-step reaction: tyrosine is first activated by ATP to form Tyr-AMP and then transferred to the acceptor end of tRNA(Tyr). The sequence is that of Tyrosine--tRNA ligase from Clostridium perfringens (strain ATCC 13124 / DSM 756 / JCM 1290 / NCIMB 6125 / NCTC 8237 / Type A).